The sequence spans 70 residues: U2-agatoxin-Ao1b (70 aa).

Positions 1-20 (MRAIISLILISAMVFSMIAA) are cleaved as a signal peptide. A propeptide spanning residues 21 to 34 (VPEEEGLQLSEDER) is cleaved from the precursor. 3 disulfides stabilise this stretch: cysteine 37–cysteine 53, cysteine 44–cysteine 58, and cysteine 52–cysteine 68. Leucine 69 is modified (leucine amide).

Belongs to the neurotoxin 01 (U2-agtx) family. In terms of tissue distribution, expressed by the venom gland.

Its subcellular location is the secreted. Its function is as follows. Insect active toxin causing rapid but reversible paralysis in crickets. No activity shown in mammals. Does not show effect on mammalian voltage-gated calcium channels. This chain is U2-agatoxin-Ao1b, found in Agelena orientalis (Funnel-web spider).